A 194-amino-acid polypeptide reads, in one-letter code: Type II methyltransferase M.MjaVI (194 aa).

This sequence belongs to the N(4)/N(6)-methyltransferase family. N(4) subfamily.

It carries out the reaction a 2'-deoxycytidine in DNA + S-adenosyl-L-methionine = an N(4)-methyl-2'-deoxycytidine in DNA + S-adenosyl-L-homocysteine + H(+). Functionally, a beta subtype methylase that recognizes the double-stranded sequence 5'-CCGG-3', methylates C-1 on both strands, and protects the DNA from cleavage by the MjaVI endonuclease. The chain is Type II methyltransferase M.MjaVI (mjaVIM) from Methanocaldococcus jannaschii (strain ATCC 43067 / DSM 2661 / JAL-1 / JCM 10045 / NBRC 100440) (Methanococcus jannaschii).